Here is a 555-residue protein sequence, read N- to C-terminus: Zinc transporter ZIP5 (555 aa).

At 1–242 (MGGQTVWMTL…HSQASKTSEG (242 aa)) the chain is on the extracellular side. The segment at 108–148 (KHPSQSISHSHSHEDHHPSQGTTNSPPLRESLDAKSALSGS) is disordered. Residues 243–263 (FLIALGWASLALLVISLPSLV) traverse the membrane as a helical segment. At 264-314 (ALGMAPLLQPSVLQVFLCPMAGMAVGTLCGDALLHLMPHAIFSQHTDHQNA) the chain is on the cytoplasmic side. Residues 315–335 (VFKGLSVLGGLYLLFIFESLL) traverse the membrane as a helical segment. The Extracellular portion of the chain corresponds to 336–408 (GLKQHFKNLK…DGIHNLTDGL (73 aa)). Residues 363–374 (TSSANQNESSGH) are compositionally biased toward polar residues. Residues 363–383 (TSSANQNESSGHGHSHGQAEP) are disordered. Residues 409–429 (AIGVAFSQSLTGGFSTAIAVF) form a helical membrane-spanning segment. The Cytoplasmic segment spans residues 430-452 (CHELPHELGDLAVLLSAGWPVRR). Residues 453-473 (LLVFSGLSALLGFVGVLAGSA) traverse the membrane as a helical segment. The Extracellular portion of the chain corresponds to 474–482 (LGNHWASHS). A helical transmembrane segment spans residues 483 to 503 (PWILTLTAGVFLYVALADMMP). Topologically, residues 504 to 518 (EMLHGACGSVSPLKR) are cytoplasmic. The helical transmembrane segment at 519–539 (FLLQALGLLTGGAIMLCIALF) threads the bilayer. At 540 to 555 (EDHIAVSLGENSLGEN) the chain is on the extracellular side.

It belongs to the ZIP transporter (TC 2.A.5) family.

The protein localises to the basolateral cell membrane. The enzyme catalyses Zn(2+)(in) = Zn(2+)(out). In terms of biological role, uniporter that transports zinc(2+) into polarized cells of enterocytes, pancreatic acinar and endoderm cells across the basolateral membrane and participates, notably, in zinc excretion from the intestine by the uptake of zinc from the blood into the intestine. The transport mechanism is temperature- and concentration-dependent and saturable. Mediates zinc homeostasis that is essential for venous angiogenesis. This is Zinc transporter ZIP5 (slc39a5) from Danio rerio (Zebrafish).